The chain runs to 498 residues: Aspartyl aminopeptidase (498 aa).

His-91 lines the Zn(2+) pocket. His-166 contributes to the substrate binding site. Asp-274 contributes to the Zn(2+) binding site. Glu-311 provides a ligand contact to substrate. Zn(2+)-binding residues include Glu-312 and Asp-363. Substrate contacts are provided by Asp-363, His-366, Lys-391, and Tyr-398. His-463 is a binding site for Zn(2+).

It belongs to the peptidase M18 family. In terms of assembly, tetrahedron-shaped homododecamer built from six homodimers. The cofactor is Zn(2+). The N-terminus is blocked.

The enzyme catalyses Release of an N-terminal aspartate or glutamate from a peptide, with a preference for aspartate.. Its activity is regulated as follows. Inhibited by zinc. Stimulated by calcium and bacitracin. The polypeptide is Aspartyl aminopeptidase (dapA) (Aspergillus oryzae (strain ATCC 42149 / RIB 40) (Yellow koji mold)).